The primary structure comprises 195 residues: uncharacterized protein (195 aa).

Positions 24 to 141 (NTDENLKLIF…VFLADKISWD (118 aa)) constitute an HD domain.

This is an uncharacterized protein from Lactococcus lactis subsp. cremoris (Streptococcus cremoris).